Reading from the N-terminus, the 555-residue chain is T-complex protein 1 subunit gamma (555 aa).

The segment at 527–555 (KKKQAPGSGPSKPTIETEGDADNEQILPD) is disordered.

It belongs to the TCP-1 chaperonin family. Heterooligomeric complex of about 850 to 900 kDa that forms two stacked rings, 12 to 16 nm in diameter. Interacts with CCT8.

It is found in the cytoplasm. In terms of biological role, molecular chaperone; assists the folding of proteins upon ATP hydrolysis. Known to play a role, in vitro, in the folding of actin and tubulin. This Arabidopsis thaliana (Mouse-ear cress) protein is T-complex protein 1 subunit gamma.